The chain runs to 447 residues: Ribosomal protein uS12 methylthiotransferase RimO (447 aa).

In terms of domain architecture, MTTase N-terminal spans 4 to 114 (PKVGFVSLGC…VMEAVHEYVP (111 aa)). [4Fe-4S] cluster-binding residues include Cys-13, Cys-49, Cys-78, Cys-147, Cys-151, and Cys-154. In terms of domain architecture, Radical SAM core spans 133 to 370 (LTPKHYAYLK…MQVQQEISAA (238 aa)). Residues 373–443 (QKRIGQTMTV…EYDLFAKLIQ (71 aa)) form the TRAM domain.

The protein belongs to the methylthiotransferase family. RimO subfamily. [4Fe-4S] cluster is required as a cofactor.

It is found in the cytoplasm. The catalysed reaction is L-aspartate(89)-[ribosomal protein uS12]-hydrogen + (sulfur carrier)-SH + AH2 + 2 S-adenosyl-L-methionine = 3-methylsulfanyl-L-aspartate(89)-[ribosomal protein uS12]-hydrogen + (sulfur carrier)-H + 5'-deoxyadenosine + L-methionine + A + S-adenosyl-L-homocysteine + 2 H(+). Functionally, catalyzes the methylthiolation of an aspartic acid residue of ribosomal protein uS12. In Acinetobacter baylyi (strain ATCC 33305 / BD413 / ADP1), this protein is Ribosomal protein uS12 methylthiotransferase RimO.